Consider the following 522-residue polypeptide: Target of rapamycin complex 2 subunit MAPKAP1 (522 aa).

A2 is subject to N-acetylalanine. Residues 2–184 form an interaction with MAP3K2 region; the sequence is AFLDNPTIIL…KKIDVYLPLH (183 aa). The interaction with NBN stretch occupies residues 2–267; sequence AFLDNPTIIL…GFSTLALVEK (266 aa). The tract at residues 38 to 59 is disordered; sequence LEKTHPPSVPGDSGSEVQGSSG. The residue at position 86 (T86) is a Phosphothreonine. Phosphoserine is present on residues S128, S186, S315, and S356. The CRIM domain occupies 139–267; that stretch reads QSILSVRLEQ…GFSTLALVEK (129 aa). Residues 279–353 are SIN1-type RBD; it reads LFVRINAAHG…QNAWEFCLVR (75 aa). An SIN1-type PH domain is found at 382 to 487; the sequence is HYKSFKVSMI…IVLKVNYILE (106 aa). A 1,2-diacyl-sn-glycero-3-phospho-(1D-myo-inositol-3,4,5-trisphosphate) is bound at residue R393. A Phosphothreonine modification is found at T398. Positions 428 and 464 each coordinate a 1,2-diacyl-sn-glycero-3-phospho-(1D-myo-inositol-3,4,5-trisphosphate). The interval 468 to 522 is interaction with ATF2; that stretch reads FESDAATVSEIVLKVNYILESRASTARADYFAQKQRKLNRRTSFSFQKEKKSGQQ. S510 carries the post-translational modification Phosphoserine.

The protein belongs to the SIN1 family. As to quaternary structure, component of the mechanistic target of rapamycin complex 2 (mTORC2), consisting in two heterotretramers composed of MTOR, MLST8, RICTOR and MAPKAP1/SIN1. The mTORC2 core complex associates with PRR5/PROTOR1 and/or PRR5L/PROTOR2. Contrary to mTORC1, mTORC2 does not bind to and is not sensitive to FKBP12-rapamycin. Interacts with MAP3K2. Interacts with ATF2. Interacts with MAPK8. Interacts with GTP-bound HRAS and KRAS; inhibiting their activity. Interacts with IFNAR2. Post-translationally, phosphorylation at Ser-128 by PKC promotes relocalization to the perinuclear region, where the mTORC2 complex specifically mediates phosphorylation of SGK1. Phosphorylated at Thr-86 by AKT1 or RPS6KB1 in the presence of growth factors; the effect of this phosphorylation is however unclear. According to two studies, phosphorylation at Thr-86 by AKT1 is part of a positive feedback loop that increases mTORC2 activation. According to another study, phosphorylation at Thr-86 and Thr-398 by RPS6KB1 promotes dissociation from the mTORC2 complex, leading to inhibit mTORC2 signaling.

The protein resides in the cell membrane. The protein localises to the endoplasmic reticulum membrane. It localises to the early endosome membrane. It is found in the late endosome membrane. Its subcellular location is the lysosome membrane. The protein resides in the golgi apparatus membrane. The protein localises to the mitochondrion outer membrane. It localises to the cytoplasm. It is found in the perinuclear region. Its subcellular location is the nucleus. Phosphatidylinositol 3,4,5-trisphosphate (PI(3,4,5)P3) promotes MTOR activation by relieving MAPKAP1/SIN1-mediated inhibition of MTOR that takes place in absence of PI(3,4,5)P3. Functionally, component of the mechanistic target of rapamycin complex 2 (mTORC2), which transduces signals from growth factors to pathways involved in proliferation, cytoskeletal organization, lipogenesis and anabolic output. In response to growth factors, mTORC2 phosphorylates and activates AGC protein kinase family members, including AKT (AKT1, AKT2 and AKT3), PKC (PRKCA, PRKCB and PRKCE) and SGK1. In contrast to mTORC1, mTORC2 is nutrient-insensitive. Within the mTORC2 complex, MAPKAP1/SIN1 acts as a substrate adapter which recognizes and binds AGC protein kinase family members for phosphorylation by MTOR. mTORC2 plays a critical role in AKT1 activation by mediating phosphorylation of different sites depending on the context, such as 'Thr-450', 'Ser-473', 'Ser-477' or 'Thr-479', facilitating the phosphorylation of the activation loop of AKT1 on 'Thr-308' by PDPK1/PDK1 which is a prerequisite for full activation. mTORC2 catalyzes the phosphorylation of SGK1 at 'Ser-422' and of PRKCA on 'Ser-657'. The mTORC2 complex also phosphorylates various proteins involved in insulin signaling, such as FBXW8 and IGF2BP1. mTORC2 acts upstream of Rho GTPases to regulate the actin cytoskeleton, probably by activating one or more Rho-type guanine nucleotide exchange factors. mTORC2 promotes the serum-induced formation of stress-fibers or F-actin. MAPKAP1 inhibits MAP3K2 by preventing its dimerization and autophosphorylation. Inhibits HRAS and KRAS independently of mTORC2 complex. Enhances osmotic stress-induced phosphorylation of ATF2 and ATF2-mediated transcription. Involved in ciliogenesis, regulates cilia length through its interaction with CCDC28B independently of mTORC2 complex. This Rattus norvegicus (Rat) protein is Target of rapamycin complex 2 subunit MAPKAP1.